Consider the following 486-residue polypeptide: Cardiolipin synthase A (486 aa).

Helical transmembrane passes span 3 to 23 (TVYT…IAGV) and 38 to 58 (MAWL…YLAV). 2 PLD phosphodiesterase domains span residues 219 to 246 (MDLR…VDPR) and 399 to 426 (EGGL…DMRS). Catalysis depends on residues histidine 224, lysine 226, aspartate 231, histidine 404, lysine 406, and aspartate 411.

It belongs to the phospholipase D family. Cardiolipin synthase subfamily. ClsA sub-subfamily.

It localises to the cell inner membrane. It carries out the reaction 2 a 1,2-diacyl-sn-glycero-3-phospho-(1'-sn-glycerol) = a cardiolipin + glycerol. Catalyzes the reversible phosphatidyl group transfer from one phosphatidylglycerol molecule to another to form cardiolipin (CL) (diphosphatidylglycerol) and glycerol. This Shigella boydii serotype 4 (strain Sb227) protein is Cardiolipin synthase A.